A 187-amino-acid polypeptide reads, in one-letter code: MATTNDLKNGMVLNIDGQLWAVVEFQHVKPGKGPAFVRTKLKNVESNKTVDKTFNAGTKVETATVDRRTMQYLYNDGSSYVFMDVQSYDQLEIAPEIVGNAKNFLLENQEAIVATNEGRVLFIELPASVELEITFTEPGLAGDSATGRTKPATLETGHEIQVPLFINQGEKVKVDTRDSSYLGRVKG.

Belongs to the elongation factor P family.

The protein resides in the cytoplasm. The protein operates within protein biosynthesis; polypeptide chain elongation. Functionally, involved in peptide bond synthesis. Stimulates efficient translation and peptide-bond synthesis on native or reconstituted 70S ribosomes in vitro. Probably functions indirectly by altering the affinity of the ribosome for aminoacyl-tRNA, thus increasing their reactivity as acceptors for peptidyl transferase. This Nocardioides sp. (strain ATCC BAA-499 / JS614) protein is Elongation factor P.